A 227-amino-acid chain; its full sequence is Prolactin-4A1 (227 aa).

The N-terminal stretch at 1 to 31 (MHLSLTPQWSSWTVLLLLVSNLLLWENTASA) is a signal peptide. Cystine bridges form between cysteine 87-cysteine 203 and cysteine 220-cysteine 227. An N-linked (GlcNAc...) asparagine glycan is attached at asparagine 175.

Belongs to the somatotropin/prolactin family. As to expression, expressed specifically in placenta. Expressed in both trophoblast giant cells and spongiotrophoblast cells.

Its subcellular location is the secreted. This Mus musculus (Mouse) protein is Prolactin-4A1 (Prl4a1).